The primary structure comprises 400 residues: Serine/threonine transporter SstT (400 aa).

Helical transmembrane passes span 11-31, 45-65, 81-101, 138-158, 175-195, 213-233, 242-264, 295-315, 327-347, and 354-374; these read IGLV…GWLA, FVGA…MAAI, IMYM…SFLF, AIAE…GFAL, AISQ…LGLV, ILMV…PLII, YPLV…SSAA, MAGA…TLGI, LVAT…LLLI, and FSIP…IGVI.

Belongs to the dicarboxylate/amino acid:cation symporter (DAACS) (TC 2.A.23) family.

It localises to the cell inner membrane. It catalyses the reaction L-serine(in) + Na(+)(in) = L-serine(out) + Na(+)(out). It carries out the reaction L-threonine(in) + Na(+)(in) = L-threonine(out) + Na(+)(out). Functionally, involved in the import of serine and threonine into the cell, with the concomitant import of sodium (symport system). The sequence is that of Serine/threonine transporter SstT from Psychrobacter cryohalolentis (strain ATCC BAA-1226 / DSM 17306 / VKM B-2378 / K5).